The following is a 652-amino-acid chain: NADH-ubiquinone oxidoreductase chain 5 (652 aa).

16 helical membrane-spanning segments follow: residues Met-1 to Arg-21, Leu-30 to Val-50, Ile-72 to Ile-92, Leu-119 to Gly-139, Trp-140 to Ala-160, Phe-177 to Val-197, Leu-200 to Ala-220, Thr-241 to Met-261, Leu-274 to Phe-294, Val-301 to Leu-319, Asn-331 to Ala-351, Phe-365 to Phe-385, Phe-403 to Leu-423, Leu-454 to Thr-474, Phe-505 to Ile-525, and Leu-619 to Leu-639.

The protein belongs to the complex I subunit 5 family.

The protein localises to the mitochondrion inner membrane. The catalysed reaction is a ubiquinone + NADH + 5 H(+)(in) = a ubiquinol + NAD(+) + 4 H(+)(out). Functionally, core subunit of the mitochondrial membrane respiratory chain NADH dehydrogenase (Complex I) that is believed to belong to the minimal assembly required for catalysis. Complex I functions in the transfer of electrons from NADH to the respiratory chain. The immediate electron acceptor for the enzyme is believed to be ubiquinone. This Podospora anserina (strain S / ATCC MYA-4624 / DSM 980 / FGSC 10383) (Pleurage anserina) protein is NADH-ubiquinone oxidoreductase chain 5 (ND5).